The following is a 128-amino-acid chain: Protein FAM229A (128 aa).

Residues 1–96 (MQSSPSTLGP…VATDQNPVRP (96 aa)) are disordered.

This sequence belongs to the FAM229 family.

The polypeptide is Protein FAM229A (Fam229a) (Mus musculus (Mouse)).